We begin with the raw amino-acid sequence, 67 residues long: MGNIKQAFIKRTARELFDRYPDKFTRDFEHNKRMVQELTNVTSKTIRNRIAGYITRLVRMKEEGKIL.

The protein belongs to the eukaryotic ribosomal protein eS17 family.

This chain is Small ribosomal subunit protein eS17, found in Thermococcus gammatolerans (strain DSM 15229 / JCM 11827 / EJ3).